Reading from the N-terminus, the 296-residue chain is 4-hydroxy-tetrahydrodipicolinate synthase (296 aa).

A pyruvate-binding site is contributed by threonine 47. Tyrosine 135 (proton donor/acceptor) is an active-site residue. Residue lysine 164 is the Schiff-base intermediate with substrate of the active site. Position 207 (isoleucine 207) interacts with pyruvate.

This sequence belongs to the DapA family. As to quaternary structure, homotetramer; dimer of dimers.

The protein localises to the cytoplasm. The catalysed reaction is L-aspartate 4-semialdehyde + pyruvate = (2S,4S)-4-hydroxy-2,3,4,5-tetrahydrodipicolinate + H2O + H(+). It functions in the pathway amino-acid biosynthesis; L-lysine biosynthesis via DAP pathway; (S)-tetrahydrodipicolinate from L-aspartate: step 3/4. In terms of biological role, catalyzes the condensation of (S)-aspartate-beta-semialdehyde [(S)-ASA] and pyruvate to 4-hydroxy-tetrahydrodipicolinate (HTPA). The sequence is that of 4-hydroxy-tetrahydrodipicolinate synthase from Karelsulcia muelleri (strain GWSS) (Sulcia muelleri).